A 301-amino-acid chain; its full sequence is MIDWAESESGKGDKVEPKEENEAEESKDGEGTQSESGQKKESSKEAEDADVDRRVHTTVGSGSGAKGFRERANENVDRGDGKVCGGVGDVDAGVGTTGTNGGRWVVLTEEIARAIESKYGTKIDVYRDEVPAQIIEVERSLQKELGISREGVAEQTERLRDLRRKEKSETHARVAEKGRRKQGKRVHGDAQKESTEDEKTPEEPTSVGITIEGVMSQKKLLSMIGGVERKMAPIGARESAVMLVSNSIKDVVRATAYFTAPTGDPHWKEVAREASKKKNILAYTSTGGDVKTEFLHLIDHL.

Disordered regions lie at residues Met1–Thr99 and Arg163–Gly208. 3 stretches are compositionally biased toward basic and acidic residues: residues Glu8–Glu30, Gly37–Val55, and Gly67–Gly81. Residue Lys82 participates in ATP binding. Composition is skewed to basic and acidic residues over residues Arg163 to Lys177 and Val186 to Glu202.

It belongs to the orbivirus VP6 family. As to quaternary structure, homohexamer.

It localises to the virion. It carries out the reaction ATP + H2O = ADP + phosphate + H(+). In terms of biological role, ATP dependent RNA helicase essential for RNA packaging and viral transcription. Possesses ss- and dsRNA-binding capacity. The chain is Helicase VP6-A (Segment-9) from Bluetongue virus 2 (isolate USA) (BTV 2).